We begin with the raw amino-acid sequence, 78 residues long: Small ribosomal subunit protein bS18c (78 aa).

The protein belongs to the bacterial ribosomal protein bS18 family. As to quaternary structure, part of the 30S ribosomal subunit.

The protein resides in the plastid. It is found in the chloroplast. This Oltmannsiellopsis viridis (Marine flagellate) protein is Small ribosomal subunit protein bS18c.